Consider the following 275-residue polypeptide: Peflin (275 aa).

8 tandem repeats follow at residues 21–29 (PPGGYYPGP), 31–39 (HGGGQYGSG), 41–49 (PPGGGYGAP), 50–59 (APGGPYGYPS), 60–68 (AGGVPSGTP), 76–84 (PPGGPYGQL), 85–91 (PPGGPYG), and 92–100 (TQPGHYGQG). 2 disordered regions span residues 21–45 (PPGG…PGGG) and 59–103 (SAGG…GGVP). Positions 21–100 (PPGGYYPGPP…GTQPGHYGQG (80 aa)) are 8 X 9 AA approximate tandem repeat of [AP]-P-G-G-P-Y-G-G-P-P. A compositionally biased stretch (gly residues) spans 31–45 (HGGGQYGSGLPPGGG). Residues 59-70 (SAGGVPSGTPSG) are compositionally biased toward low complexity. EF-hand domains follow at residues 105-140 (NVDP…SNWS), 146-174 (TCLM…WKFL), 172-207 (KFLQ…MGYN), 208-244 (LSPQ…LQVL), and 245-274 (TEAF…ASRM). The Ca(2+) site is built by D118, D120, S122, Y124, and E129. Ca(2+)-binding residues include D185, D187, S189, S191, and E196. A required for interaction with PDCD6 region spans residues 195-275 (TELQQALSQM…FVTMTASRML (81 aa)).

As to quaternary structure, heterodimer; heterodimerizes (via the EF-hand 5) with PDCD6. Dissociates from PDCD6 in presence of calcium. Post-translationally, ubiquitinated by the BCR(KLHL12) E3 ubiquitin ligase complex.

The protein localises to the cytoplasm. The protein resides in the endoplasmic reticulum. Its subcellular location is the membrane. It localises to the cytoplasmic vesicle. It is found in the COPII-coated vesicle membrane. Its function is as follows. Calcium-binding protein that acts as an adapter that bridges unrelated proteins or stabilizes weak protein-protein complexes in response to calcium. Together with PDCD6, acts as a calcium-dependent adapter for the BCR(KLHL12) complex, a complex involved in endoplasmic reticulum (ER)-Golgi transport by regulating the size of COPII coats. In response to cytosolic calcium increase, the heterodimer formed with PDCD6 interacts with, and bridges together the BCR(KLHL12) complex and SEC31 (SEC31A or SEC31B), promoting monoubiquitination of SEC31 and subsequent collagen export, which is required for neural crest specification. Its role in the heterodimer formed with PDCD6 is however unclear: some evidence shows that PEF1 and PDCD6 work together and promote association between PDCD6 and SEC31 in presence of calcium. Other reports show that PEF1 dissociates from PDCD6 in presence of calcium, and may act as a negative regulator of PDCD6. Also acts as a negative regulator of ER-Golgi transport; possibly by inhibiting interaction between PDCD6 and SEC31. The polypeptide is Peflin (Mus musculus (Mouse)).